The primary structure comprises 660 residues: MLLHFILYAALSSVVTSVSLQPRLQDGLALTPQMGWNTYNHYSCSPNETIVQSNAQALVDLGLSSLGYRYVTTDCGWTVADRLPDGSLTWNDTLFPQGFPAMGDFLHDLGLLFGVYQDSGILLCGSPPNETGSLYHEEQDARTFASWNVDSLKYDNCYSDAATGYPNVNYAPSTSPEPRFANMSHALLQQNRTILFQICEWGISFPANWAPALGHSWRIGNDIIPDWRTIFRIINQAAPQTDVAGPGQWPDLDMLEVGNNIFSLPEEQTHFSLWAILKSPLIIGAALKDELTAINDASLAVLKQKDVIAFNQDALGKSASLRRRWTEEGYEVWSGPLSNGRTVAAVINWHNESKDLTLDLPDVGLQHAGTVKNIWDGTTARDVLTSYTATVAGHGTMLLELQNTTAVGVYPRGVFGVSSGQTTTFQNIYAVTTSAKYIISVYFSQPASSTETITIGSNANQSMISAQVPASSTLVSAEIPLTAGSSNTITINTSIPIDAIHVTPPNGTYYPCTNFTLAGSTTLTTCGSGYCQPVGSKVGYISPSGTAKATISATTSGSKYLEIDWINNDIAFDSSWGWGSNSRNLTVTVNSEDPVRIEVPLSGRHSELFGPGLGWWDTSTLGLLTSGWKEGLNEVVVGNVGGDEGFQSYGADFVGIRVLD.

An N-terminal signal peptide occupies residues 1–20; the sequence is MLLHFILYAALSSVVTSVSL. Asn-47, Asn-91, and Asn-129 each carry an N-linked (GlcNAc...) asparagine glycan. Cys-124 and Cys-157 form a disulfide bridge. Asp-155 functions as the Nucleophile in the catalytic mechanism. N-linked (GlcNAc...) asparagine glycans are attached at residues Asn-182 and Asn-191. 200–204 serves as a coordination point for substrate; sequence EWGIS. Catalysis depends on Asp-222, which acts as the Proton donor. Asn-351, Asn-403, Asn-460, Asn-492, Asn-506, Asn-514, and Asn-584 each carry an N-linked (GlcNAc...) asparagine glycan.

This sequence belongs to the glycosyl hydrolase 27 family.

The protein localises to the secreted. It catalyses the reaction Hydrolysis of terminal, non-reducing alpha-D-galactose residues in alpha-D-galactosides, including galactose oligosaccharides, galactomannans and galactolipids.. Hydrolyzes a variety of simple alpha-D-galactoside as well as more complex molecules such as oligosaccharides and polysaccharides. The protein is Probable alpha-galactosidase D (aglD) of Aspergillus niger (strain ATCC MYA-4892 / CBS 513.88 / FGSC A1513).